The primary structure comprises 1311 residues: AF4/FMR2 family member 2 (1311 aa).

3 disordered regions span residues 94 to 187 (LVGI…LTQD), 204 to 229 (PQIG…GEDA), and 377 to 417 (TAGH…TKSV). The segment covering 101–111 (SVPQNPNNKNE) has biased composition (polar residues). Positions 155-164 (SKPEWSRDSH) are enriched in basic and acidic residues. Residues 165 to 187 (NPSTVLASQASGQPNKMQTLTQD) are compositionally biased toward polar residues. Composition is skewed to polar residues over residues 377–396 (TAGH…SQHL) and 403–417 (QKWN…TKSV). At serine 430 the chain carries Phosphoserine. Disordered stretches follow at residues 457-530 (KAKP…KWQL), 574-726 (TNAS…DQEE), 818-867 (SLHA…IPEK), and 881-943 (PPCI…DKNI). Pro residues predominate over residues 465-477 (VNPPLATPQPPPA). The span at 478 to 491 (VQASGGSGSSSESE) shows a compositional bias: low complexity. Threonine 517 is modified (phosphothreonine). Over residues 582–597 (EPKERPLLSLIREKAR) the composition is skewed to basic and acidic residues. The span at 615–625 (STTSETVSQRT) shows a compositional bias: polar residues. Basic and acidic residues predominate over residues 655-668 (PKEKESVELHDPPR). Residues 669-679 (GRNKATAHKPA) show a composition bias toward basic residues. Residues 857-867 (PIEVAEKIPEK) show a composition bias toward basic and acidic residues. 2 stretches are compositionally biased toward pro residues: residues 883–892 (CISPAPPHKP) and 913–922 (FPPPLSPLPE).

Belongs to the AF4 family. Brain (most abundant in hippocampus and amygdala), placenta and lung.

It localises to the nucleus speckle. RNA-binding protein. Might be involved in alternative splicing regulation through an interaction with G-quartet RNA structure. This chain is AF4/FMR2 family member 2, found in Homo sapiens (Human).